The following is a 160-amino-acid chain: Archaemetzincin (160 aa).

A Zn(2+)-binding site is contributed by His117. Residue Glu118 is the Proton acceptor of the active site. Residues His121, His127, Cys128, Cys132, Cys151, and Cys154 each contribute to the Zn(2+) site.

It belongs to the peptidase M54 family. In terms of assembly, monomer. Requires Zn(2+) as cofactor.

Its function is as follows. Probable zinc metalloprotease whose natural substrate is unknown. This Archaeoglobus fulgidus (strain ATCC 49558 / DSM 4304 / JCM 9628 / NBRC 100126 / VC-16) protein is Archaemetzincin.